Reading from the N-terminus, the 656-residue chain is Methionine--tRNA ligase (656 aa).

The 'HIGH' region motif lies at 13–23 (YYPSGNLHIGH). Residues 308–312 (KMSKS) carry the 'KMSKS' region motif. Position 311 (lysine 311) interacts with ATP. In terms of domain architecture, tRNA-binding spans 556 to 656 (DFDKVEIKAA…SAIPNGAVIK (101 aa)).

Belongs to the class-I aminoacyl-tRNA synthetase family. MetG type 2B subfamily. Homodimer.

It localises to the cytoplasm. The enzyme catalyses tRNA(Met) + L-methionine + ATP = L-methionyl-tRNA(Met) + AMP + diphosphate. Is required not only for elongation of protein synthesis but also for the initiation of all mRNA translation through initiator tRNA(fMet) aminoacylation. The polypeptide is Methionine--tRNA ligase (Staphylococcus epidermidis (strain ATCC 12228 / FDA PCI 1200)).